The primary structure comprises 2094 residues: Nuclear mitotic apparatus protein 1 (2094 aa).

The head (Globular) stretch occupies residues 1-210 (MTLHATRAAT…SPMGDILQTP (210 aa)). Ser160 carries the phosphoserine modification. Thr161 carries the post-translational modification Phosphothreonine. A phosphoserine mark is found at Ser167 and Ser201. The residue at position 209 (Thr209) is a Phosphothreonine. Residues 211–1681 (QFQMRRLKKQ…ADQQLRDLGK (1471 aa)) are a coiled coil. Ser269 bears the Phosphoserine mark. Lys377 carries the N6-acetyllysine modification. Phosphoserine occurs at positions 386 and 398. Lys443 carries the N6-acetyllysine modification. Disordered stretches follow at residues 617-636 (QLQA…TQAQ) and 723-759 (LKEQ…AGRK). Polar residues predominate over residues 627 to 636 (NAQTSVTQAQ). Lys878 bears the N6-acetyllysine mark. Disordered stretches follow at residues 921-1000 (SLEL…TQER), 1081-1143 (LVKK…EGLT), and 1173-1223 (ELGH…SSLI). Residues 935-951 (ASDQLGEQQGRPFSSTH) are compositionally biased toward polar residues. Composition is skewed to basic and acidic residues over residues 956–972 (AMER…ERLR) and 983–998 (QEER…RLTQ). The residue at position 1183 (Ser1183) is a Phosphoserine. Residues 1194–1206 (KAQDHSKAEEEWK) show a composition bias toward basic and acidic residues. The residue at position 1221 (Ser1221) is a Phosphoserine. At Lys1507 the chain carries N6-acetyllysine. A Phosphoserine modification is found at Ser1583. A Glycyl lysine isopeptide (Lys-Gly) (interchain with G-Cter in SUMO2) cross-link involves residue Lys1681. A membrane-binding domain 1 region spans residues 1681-1858 (KFQVATDALK…NSALLSLPGY (178 aa)). The tract at residues 1682–2094 (FQVATDALKS…TPRAKGKVKH (413 aa)) is tail (Globular). Phosphoserine is present on residues Ser1703, Ser1706, and Ser1710. Residues 1718 to 1743 (SVASKLPRTQPDGTSVPGEPASPISQ) form a disordered region. Positions 1724-1730 (PRTQPDG) match the Tankyrase-binding domain motif. Ser1739 and Ser1742 each carry phosphoserine. Lys1748 participates in a covalent cross-link: Glycyl lysine isopeptide (Lys-Gly) (interchain with G-Cter in SUMO1); alternate. Lys1748 is covalently cross-linked (Glycyl lysine isopeptide (Lys-Gly) (interchain with G-Cter in SUMO2); alternate). Ser1751 carries the phosphoserine modification. Residue Ser1754 is modified to Phosphoserine; by PLK1. Tyr1756 carries the phosphotyrosine modification. Thr1758 is subject to Phosphothreonine. A disordered region spans residues 1760 to 1795 (TPARGQAPLETSLDSLGDAFPDSGRKTRSARRRTTQ). The tract at residues 1770–1792 (TSLDSLGDAFPDSGRKTRSARRR) is 4.1-binding domain. Ser1771 is modified (phosphoserine; by PLK1). Residues Ser1774 and Ser1782 each carry the phosphoserine modification. Thr1786 is subject to Phosphothreonine. Residue Lys1804 forms a Glycyl lysine isopeptide (Lys-Gly) (interchain with G-Cter in SUMO2) linkage. Disordered stretches follow at residues 1807 to 1883 (LEEP…GRNS) and 1937 to 2094 (EMKT…KVKH). Residues Ser1812 and Ser1815 each carry the phosphoserine modification. Positions 1812–1839 (SANSSFYSTQSAPASQANLRATSSTQSL) are enriched in polar residues. A Phosphoserine; by PLK1 modification is found at Ser1816. Tyr1818 is subject to Phosphotyrosine. Ser1822 carries the post-translational modification Phosphoserine. A Phosphoserine; alternate modification is found at Ser1826. Residue Ser1826 is glycosylated (O-linked (GlcNAc) serine; alternate). Ser1844 and Ser1869 each carry phosphoserine. The tract at residues 1864–1967 (SSARRSQARM…AEGVGITTRQ (104 aa)) is tubulin-binding domain. Residues 1874 to 1908 (SSGAPQGRNSFYMGTCQDEPEQLDDWNRIAELQQR) are GPSM2-binding domain. Positions 1937–1948 (EMKTGDPRETLR) are enriched in basic and acidic residues. Ser1951 is modified (phosphoserine). The tract at residues 1963-2042 (ITTRQQRKRV…SILNTPKKLG (80 aa)) is membrane-binding domain 2. Residues 1966-1971 (RQQRKR) carry the Nuclear localization signal motif. Phosphoserine is present on residues Ser1973 and Ser1974. Phosphothreonine is present on Thr1982. Ser1985 carries the phosphoserine modification. A Phosphothreonine; by CDK1 modification is found at Thr1997. Positions 1997–2006 (TPRDRHEGRK) are enriched in basic and acidic residues. Ser2029 carries the post-translational modification Phosphoserine. Thr2037 is subject to Phosphothreonine. 2 positions are modified to phosphoserine: Ser2044 and Ser2059. Ser2069 bears the Phosphoserine; by CDK1 mark. A compositionally biased stretch (low complexity) spans 2073–2085 (ATTTTGTATVATT). Thr2085 is subject to Phosphothreonine; by CDK1.

As to quaternary structure, homodimer. Also forms multiarm oligomers by association of C-terminal tail domains, oligomers may further assemble to form a hexagonal nuclear lattice-like network. Associates with the dynein-dynactin complex; this association promotes the transport and accumulation of NUMA1 at the mitotic spindle poles that is inhibited by the BRISC complex in a PLK1-dependent manner. Part of a spindle orientation complex at least composed of GNAI1, GPSM2 and NUMA1. Interacts (via C-terminus) with microtubules (MTs); this interaction is direct and promotes both MT bundle formation and stability in a dynein-dynactin complex- and CDK1-independent manner. Interacts with EPB41 and EPB41L2; these interactions are negatively regulated by CDK1 during metaphase and are important for anaphase-specific localization of NUMA1 in symmetrically dividing cells. Interacts (via C-terminus) with GPSM2 (via TPR repeats); this interaction is direct, prevented by competitive binding of INSC, is inhibited in a PLK1-dependent manner, blocks the association of NUMA1 with MTs and inhibits NUMA1-induced MT bundle formation, prevents the association of NUMA1 with SPAG5, induces mitotic spindle pole localization of GPSM2, both metaphase cell cortex localization of NUMA1 and mitotic spindle organization. Does not interact with GPSM2 during anaphase. Interacts (via C-terminus) with the nuclear importin alpha/importin beta receptor; this interaction is inhibited by RanGTP. Interacts (via C-terminus) with KPNB1; this interaction is inhibited by RanGTP and the BRISC complex. Interacts with ABRAXAS2 and the BRISC complex; these interactions regulate mitotic spindle assembly. Interacts (via N-terminal end of the coiled-coil domain) with RAE1; this interaction promotes mitotic spindle formation. Interacts (via C-terminus) with SPAG5 (via C-terminus); this interaction promotes the recruitment of SPAG5 to the MTs at spindle poles in a dynein-dynactin-dependent manner and regulates mitotic spindle organization and proper chromosome alignment during mitosis. Interacts with TNKS; this interaction occurs at the onset of mitosis. Interacts with TNKS2. Interacts with tubulin. Interacts with KHDC3 (via C-terminus). In terms of processing, phosphorylation and dephosphorylation on Thr-2037 regulates the extent of cortical NUMA1 and the dynein-dynactin complex localization during mitotic metaphase and anaphase. In metaphase, phosphorylation on Thr-2037 occurs in a kinase CDK1-dependent manner; this phosphorylation maintains low levels of cortical dynein-dynactin complex at metaphase, and hence proper spindle positioning. In anaphase, dephosphorylated on Thr-2037 by phosphatase PPP2CA; this dephosphorylation stimulates its membrane association and with the dynein-dynactin complex its enrichment at the cell cortex, and hence robust spindle elongation. Probably also phosphorylated on Thr-1997 and Ser-2069 by CDK1; these phosphorylations may regulate its cell cortex recruitment during metaphase and anaphase. Phosphorylated on Ser-1751, Ser-1754, Ser-1771 and Ser-1816 by PLK1; these phosphorylations induce cortical dynein-dynactin complex dissociation from the NUMA1-GPSM2 complex and negatively regulates cortical dynein-dynactin complex localization. Post-translationally, ADP-ribosylated by TNKS at the onset of mitosis; ADP-ribosylation is not required for its localization to spindle poles. O-glycosylated during cytokinesis at sites identical or close to phosphorylation sites, this interferes with the phosphorylation status. In terms of processing, ubiquitinated with 'Lys-63'-linked polyubiquitin chains. Deubiquitination by the BRISC complex is important for the incorporation of NUMA1 into mitotic spindle poles and normal spindle pole function, probably by modulating interactions between NUMA1, dynein-dynactin complex and importin-beta. As to expression, expressed in testis, speen, liver, lung, spinal cord and brain. Expressed in Purkinje neurons (at protein level).

It localises to the nucleus. The protein resides in the nucleoplasm. It is found in the nucleus matrix. Its subcellular location is the chromosome. The protein localises to the cytoplasm. It localises to the cytoskeleton. The protein resides in the microtubule organizing center. It is found in the centrosome. Its subcellular location is the spindle pole. The protein localises to the cell cortex. It localises to the cell membrane. The protein resides in the lateral cell membrane. Functionally, microtubule (MT)-binding protein that plays a role in the formation and maintenance of the spindle poles and the alignement and the segregation of chromosomes during mitotic cell division. Functions to tether the minus ends of MTs at the spindle poles, which is critical for the establishment and maintenance of the spindle poles. Plays a role in the establishment of the mitotic spindle orientation during metaphase and elongation during anaphase in a dynein-dynactin-dependent manner. In metaphase, part of a ternary complex composed of GPSM2 and G(i) alpha proteins, that regulates the recruitment and anchorage of the dynein-dynactin complex in the mitotic cell cortex regions situated above the two spindle poles, and hence regulates the correct oritentation of the mitotic spindle. During anaphase, mediates the recruitment and accumulation of the dynein-dynactin complex at the cell membrane of the polar cortical region through direct association with phosphatidylinositol 4,5-bisphosphate (PI(4,5)P2), and hence participates in the regulation of the spindle elongation and chromosome segregation. Also binds to other polyanionic phosphoinositides, such as phosphatidylinositol 3-phosphate (PIP), lysophosphatidic acid (LPA) and phosphatidylinositol triphosphate (PIP3), in vitro. Also required for proper orientation of the mitotic spindle during asymmetric cell divisions. Plays a role in mitotic MT aster assembly. Involved in anastral spindle assembly. Positively regulates TNKS protein localization to spindle poles in mitosis. Highly abundant component of the nuclear matrix where it may serve a non-mitotic structural role, occupies the majority of the nuclear volume. Required for epidermal differentiation and hair follicle morphogenesis. In Mus musculus (Mouse), this protein is Nuclear mitotic apparatus protein 1.